Reading from the N-terminus, the 559-residue chain is Regulatory protein PHO2 (559 aa).

Disordered regions lie at residues 16 to 88 (ATDL…KGEA), 132 to 158 (LRKK…DYDR), 293 to 333 (INSN…AKDN), and 534 to 559 (PTDS…HRWI). Composition is skewed to low complexity over residues 24 to 52 (HDQQ…IQTQ) and 63 to 74 (NDMSASSNASDS). A DNA-binding region (homeobox) is located at residues 77 to 136 (QRPKRTRAKGEALDVLKRKFEINPTPSLVERKKISDLIGMPEKNVRIWFQNRRAKLRKKQ). Residues 141-151 (KDTIPSSQSRD) show a composition bias toward polar residues. Low complexity predominate over residues 293–307 (INSNNTSDKNNSNTN). A compositionally biased stretch (acidic residues) spans 308 to 323 (NDDDNDDNSNEDNDNS). Residues 324 to 333 (SEDKRNAKDN) show a composition bias toward basic and acidic residues. The residue at position 542 (threonine 542) is a Phosphothreonine.

The protein resides in the nucleus. Regulator in phosphate metabolism and acts as a derepressor of another central regulator PHO5. Binds to the upstream activator sequence (UAS) of PHO5. It also binds to the TRP4, HIS4, and CYC1 promoters. This Saccharomyces cerevisiae (strain ATCC 204508 / S288c) (Baker's yeast) protein is Regulatory protein PHO2 (PHO2).